Reading from the N-terminus, the 321-residue chain is tRNA U34 carboxymethyltransferase (321 aa).

Carboxy-S-adenosyl-L-methionine contacts are provided by residues K90, W104, K109, G129, 151–153, 180–181, M195, Y199, and R314; these read DPT and IE.

It belongs to the class I-like SAM-binding methyltransferase superfamily. CmoB family. As to quaternary structure, homotetramer.

The enzyme catalyses carboxy-S-adenosyl-L-methionine + 5-hydroxyuridine(34) in tRNA = 5-carboxymethoxyuridine(34) in tRNA + S-adenosyl-L-homocysteine + H(+). Catalyzes carboxymethyl transfer from carboxy-S-adenosyl-L-methionine (Cx-SAM) to 5-hydroxyuridine (ho5U) to form 5-carboxymethoxyuridine (cmo5U) at position 34 in tRNAs. The chain is tRNA U34 carboxymethyltransferase from Haemophilus influenzae (strain ATCC 51907 / DSM 11121 / KW20 / Rd).